The chain runs to 165 residues: Fimbrial protein (165 aa).

The N-terminal stretch at 1–21 (MRKSASAVAVLALIACGSAHA) is a signal peptide.

It is found in the fimbrium. In terms of biological role, structural subunit of the sef14 fimbriae. The chain is Fimbrial protein (sefA) from Salmonella enteritidis.